The chain runs to 639 residues: Coiled-coil domain-containing protein 93 homolog (639 aa).

The segment at 250-275 (KLESQLSGKDGSGKDTTEAEREEEEK) is disordered. Residues 260–275 (GSGKDTTEAEREEEEK) show a composition bias toward basic and acidic residues. Residues 332–492 (AEKLHRQKIT…KNRDISLIQR (161 aa)) are a coiled coil.

Belongs to the CCDC93 family.

This chain is Coiled-coil domain-containing protein 93 homolog, found in Dictyostelium discoideum (Social amoeba).